The following is a 363-amino-acid chain: 3-isopropylmalate dehydrogenase (363 aa).

Position 78–91 (78–91 (GPKWENLPPESQPE)) interacts with NAD(+). Residues arginine 99, arginine 109, arginine 138, and aspartate 227 each contribute to the substrate site. Residues aspartate 227, aspartate 251, and aspartate 255 each contribute to the Mg(2+) site. An NAD(+)-binding site is contributed by 285–297 (GSAPDIAGKNIAN).

Belongs to the isocitrate and isopropylmalate dehydrogenases family. LeuB type 1 subfamily. Homodimer. Mg(2+) is required as a cofactor. Mn(2+) serves as cofactor.

The protein localises to the cytoplasm. It catalyses the reaction (2R,3S)-3-isopropylmalate + NAD(+) = 4-methyl-2-oxopentanoate + CO2 + NADH. Its pathway is amino-acid biosynthesis; L-leucine biosynthesis; L-leucine from 3-methyl-2-oxobutanoate: step 3/4. In terms of biological role, catalyzes the oxidation of 3-carboxy-2-hydroxy-4-methylpentanoate (3-isopropylmalate) to 3-carboxy-4-methyl-2-oxopentanoate. The product decarboxylates to 4-methyl-2 oxopentanoate. This is 3-isopropylmalate dehydrogenase from Salmonella typhi.